A 399-amino-acid polypeptide reads, in one-letter code: MAKLTVKDVELKGKKVLVRVDFNVPVKDGVITNDNRITAALPTIKYILEQGGRAILFSHLGRVKEEADKEGKSLAPVAADLAAKLGQDVKFIPGVTRGAELEAAVNSLEDGQVLLVENTRFEDVDGKKESKNDPELGKYWASLGDGIFVNDAFGTAHRAHASNVGISANVEKAVAGFLLENEIAYIQEAVENPERPFVAILGGSKVSDKIGVIENLLEKADKVLIGGGMTYTFFKAQGIEIGNSLVEEDKLDVAKALLEKSNGKLILPVDSKEANAFADYTEVKYTEGEAVDPGFLGLDIGPKSIAKFDEALTGAKTVVWNGPMGVFENPDFQAGTIGVMDAIVKQPGVKSIIGGGDSAAAAINLGYADKFSWISTGGGASMELLEGKELPGLAALTEK.

Residues 21–23, Arg-36, 59–62, Arg-120, and Arg-158 each bind substrate; these read DFN and HLGR. Residues Lys-209, Gly-297, Glu-328, and 355–358 each bind ATP; that span reads GGDS.

It belongs to the phosphoglycerate kinase family. As to quaternary structure, monomer.

The protein resides in the cytoplasm. It catalyses the reaction (2R)-3-phosphoglycerate + ATP = (2R)-3-phospho-glyceroyl phosphate + ADP. It participates in carbohydrate degradation; glycolysis; pyruvate from D-glyceraldehyde 3-phosphate: step 2/5. The sequence is that of Phosphoglycerate kinase from Streptococcus thermophilus (strain ATCC BAA-250 / LMG 18311).